Here is a 382-residue protein sequence, read N- to C-terminus: MSRRNWINLFSTSQSVELSGDLERGYDAALLIQSLELEYYGDRQIRPELKLSVPRSVQATILRRFKTALSICRSSAAKLSDQRGQLDSQELRQLQLIESIVSRYGSRRSTSSPSISRSPDALPRSLLGVFDSIRLQLDPSTEDSVVAGFRRRRDTTLISLRVLLLLVLVPLLVSQISGTYLISPAVNQFSPELPFLSYPKPLLEEKAAKKLRLYKQELEFDAFLKGVEPLDDAELRNKLTEKATELKHDADEESLKAIKNVFADLAGLIAFAVVCLMSRDELRVLRGFVDEAVYGLSDSAKAFAIILFTDIFVGYHSPEGWSVLLDGVADHFGLPSSQSFVNLFIATFPVVLATIFKYWIFRYLNRVSPSSVATLKGMNGGG.

The next 4 membrane-spanning stretches (helical) occupy residues 162 to 182, 257 to 277, 305 to 325, and 340 to 360; these read VLLL…TYLI, AIKN…VCLM, IILF…SVLL, and FVNL…KYWI.

Belongs to the CemA family.

Its subcellular location is the cell inner membrane. Functionally, required for H(+) efflux immediately after light irradiation to form a rapid H(+) concentration gradient across the thylakoid membranes. Together with PxcL, contributes to transient H(+) uptake following dark to light transition. This is Proton extrusion protein PxcA from Synechococcus sp. (strain CC9605).